The sequence spans 280 residues: 4-hydroxy-3-methylbut-2-enyl diphosphate reductase (280 aa).

Residue cysteine 12 coordinates [4Fe-4S] cluster. (2E)-4-hydroxy-3-methylbut-2-enyl diphosphate is bound by residues histidine 40 and histidine 72. Residues histidine 40 and histidine 72 each coordinate dimethylallyl diphosphate. Residues histidine 40 and histidine 72 each coordinate isopentenyl diphosphate. Residue cysteine 94 coordinates [4Fe-4S] cluster. A (2E)-4-hydroxy-3-methylbut-2-enyl diphosphate-binding site is contributed by histidine 122. Dimethylallyl diphosphate is bound at residue histidine 122. Histidine 122 provides a ligand contact to isopentenyl diphosphate. Glutamate 124 acts as the Proton donor in catalysis. Residue threonine 160 participates in (2E)-4-hydroxy-3-methylbut-2-enyl diphosphate binding. Cysteine 188 lines the [4Fe-4S] cluster pocket. (2E)-4-hydroxy-3-methylbut-2-enyl diphosphate contacts are provided by serine 216, asparagine 218, and serine 260. Dimethylallyl diphosphate contacts are provided by serine 216, asparagine 218, and serine 260. Isopentenyl diphosphate is bound by residues serine 216, asparagine 218, and serine 260.

This sequence belongs to the IspH family. Requires [4Fe-4S] cluster as cofactor.

The enzyme catalyses isopentenyl diphosphate + 2 oxidized [2Fe-2S]-[ferredoxin] + H2O = (2E)-4-hydroxy-3-methylbut-2-enyl diphosphate + 2 reduced [2Fe-2S]-[ferredoxin] + 2 H(+). The catalysed reaction is dimethylallyl diphosphate + 2 oxidized [2Fe-2S]-[ferredoxin] + H2O = (2E)-4-hydroxy-3-methylbut-2-enyl diphosphate + 2 reduced [2Fe-2S]-[ferredoxin] + 2 H(+). It participates in isoprenoid biosynthesis; dimethylallyl diphosphate biosynthesis; dimethylallyl diphosphate from (2E)-4-hydroxy-3-methylbutenyl diphosphate: step 1/1. It functions in the pathway isoprenoid biosynthesis; isopentenyl diphosphate biosynthesis via DXP pathway; isopentenyl diphosphate from 1-deoxy-D-xylulose 5-phosphate: step 6/6. Functionally, catalyzes the conversion of 1-hydroxy-2-methyl-2-(E)-butenyl 4-diphosphate (HMBPP) into a mixture of isopentenyl diphosphate (IPP) and dimethylallyl diphosphate (DMAPP). Acts in the terminal step of the DOXP/MEP pathway for isoprenoid precursor biosynthesis. The chain is 4-hydroxy-3-methylbut-2-enyl diphosphate reductase from Pelobacter propionicus (strain DSM 2379 / NBRC 103807 / OttBd1).